Consider the following 147-residue polypeptide: Hemoglobin subunit gamma-2 (147 aa).

The Globin domain occupies 3-147 (HFTEEDKATI…VASALSSRYH (145 aa)). Thr13 is modified (phosphothreonine). Ser45, Ser51, and Ser53 each carry phosphoserine. The residue at position 60 (Lys60) is an N6-acetyllysine. His64 contributes to the heme b binding site. The residue at position 83 (Lys83) is an N6-acetyllysine. His93 lines the heme b pocket. Position 94 is an S-nitrosocysteine (Cys94). Ser140, Ser143, and Ser144 each carry phosphoserine.

It belongs to the globin family. Heterotetramer of two alpha chains and two gamma chains in fetal hemoglobin (Hb F). In terms of tissue distribution, red blood cells.

Its function is as follows. Gamma chains make up the fetal hemoglobin F, in combination with alpha chains. The polypeptide is Hemoglobin subunit gamma-2 (HBG2) (Hylobates lar (Lar gibbon)).